The primary structure comprises 235 residues: Large ribosomal subunit protein uL1 (235 aa).

Belongs to the universal ribosomal protein uL1 family. In terms of assembly, part of the 50S ribosomal subunit.

Its function is as follows. Binds directly to 23S rRNA. The L1 stalk is quite mobile in the ribosome, and is involved in E site tRNA release. Functionally, protein L1 is also a translational repressor protein, it controls the translation of the L11 operon by binding to its mRNA. This Parasynechococcus marenigrum (strain WH8102) protein is Large ribosomal subunit protein uL1.